Reading from the N-terminus, the 198-residue chain is Na(+)-translocating NADH-quinone reductase subunit E (198 aa).

6 helical membrane-spanning segments follow: residues S11–V31, M39–I59, F77–A97, G110–V130, V140–I160, and L176–I196.

This sequence belongs to the NqrDE/RnfAE family. As to quaternary structure, composed of six subunits; NqrA, NqrB, NqrC, NqrD, NqrE and NqrF.

It is found in the cell inner membrane. It carries out the reaction a ubiquinone + n Na(+)(in) + NADH + H(+) = a ubiquinol + n Na(+)(out) + NAD(+). Its function is as follows. NQR complex catalyzes the reduction of ubiquinone-1 to ubiquinol by two successive reactions, coupled with the transport of Na(+) ions from the cytoplasm to the periplasm. NqrA to NqrE are probably involved in the second step, the conversion of ubisemiquinone to ubiquinol. The protein is Na(+)-translocating NADH-quinone reductase subunit E of Aeromonas hydrophila subsp. hydrophila (strain ATCC 7966 / DSM 30187 / BCRC 13018 / CCUG 14551 / JCM 1027 / KCTC 2358 / NCIMB 9240 / NCTC 8049).